We begin with the raw amino-acid sequence, 551 residues long: RCC1 and BTB domain-containing protein 2 (551 aa).

6 RCC1 repeats span residues 64-115 (NDEI…VLAT), 117-169 (DGEV…VLTS), 171-222 (GEVF…AVVD), 223-274 (TGEV…VLTD), 276-326 (GQIY…AAKS), and 328-382 (GGHV…TVAE). One can recognise a BTB domain in the interval 394–457 (ADLKFLVDGK…LYTDNISLPP (64 aa)).

The protein resides in the cytoplasmic vesicle. It is found in the secretory vesicle. It localises to the acrosome. The chain is RCC1 and BTB domain-containing protein 2 (Rcbtb2) from Rattus norvegicus (Rat).